The following is a 495-amino-acid chain: Pentatricopeptide repeat-containing protein PPR5 homolog, chloroplastic (495 aa).

Residues Met-1–Ala-24 are disordered. The N-terminal 29 residues, Met-1–Ala-29, are a transit peptide targeting the chloroplast. PPR repeat units follow at residues Asp-120–Pro-154, Asp-155–Ile-189, Asn-195–Pro-229, Asp-230–Pro-264, Asp-265–Pro-299, Thr-300–Pro-334, Asn-335–Ser-365, His-370–Pro-404, and Ser-405–Pro-439. The segment at Asp-455–Ala-495 is disordered. Over residues Pro-462–Ala-495 the composition is skewed to polar residues.

The protein belongs to the PPR family. P subfamily.

The protein localises to the plastid. The protein resides in the chloroplast. Functionally, involved in the biogenesis of the plastid translation machinery by promoting the splicing of group II introns in chloroplasts. The chain is Pentatricopeptide repeat-containing protein PPR5 homolog, chloroplastic from Oryza sativa subsp. japonica (Rice).